Here is a 175-residue protein sequence, read N- to C-terminus: Co-chaperone protein HscB homolog (175 aa).

In terms of domain architecture, J spans 8-80; it reads DFFSLFGLPR…LNRARYLLQL (73 aa).

It belongs to the HscB family. As to quaternary structure, interacts with HscA and stimulates its ATPase activity.

Functionally, co-chaperone involved in the maturation of iron-sulfur cluster-containing proteins. Seems to help targeting proteins to be folded toward HscA. This chain is Co-chaperone protein HscB homolog, found in Chromobacterium violaceum (strain ATCC 12472 / DSM 30191 / JCM 1249 / CCUG 213 / NBRC 12614 / NCIMB 9131 / NCTC 9757 / MK).